Here is a 401-residue protein sequence, read N- to C-terminus: Phosphoglycerate kinase (401 aa).

Substrate-binding positions include 20-22 (DFN), R35, 58-61 (HLGR), R117, and R154. ATP is bound by residues K204, G298, E329, and 358-361 (GGDS).

This sequence belongs to the phosphoglycerate kinase family. In terms of assembly, monomer.

It localises to the cytoplasm. It carries out the reaction (2R)-3-phosphoglycerate + ATP = (2R)-3-phospho-glyceroyl phosphate + ADP. It functions in the pathway carbohydrate degradation; glycolysis; pyruvate from D-glyceraldehyde 3-phosphate: step 2/5. The protein is Phosphoglycerate kinase of Bifidobacterium longum (strain NCC 2705).